The primary structure comprises 367 residues: Probable butyrate kinase (367 aa).

The protein belongs to the acetokinase family.

It localises to the cytoplasm. The catalysed reaction is butanoate + ATP = butanoyl phosphate + ADP. The chain is Probable butyrate kinase from Bacillus anthracis (strain A0248).